Here is a 321-residue protein sequence, read N- to C-terminus: Basic peroxidase (321 aa).

The signal sequence occupies residues 1-30 (MSYHKSSGTTLMVPLFMLLISVNYFMSCNA). Gln31 is modified (pyrrolidone carboxylic acid). Intrachain disulfides connect Cys41–Cys117, Cys74–Cys79, Cys123–Cys317, and Cys202–Cys228. The active-site Proton acceptor is the His72. 5 residues coordinate Ca(2+): Asp73, Val76, Gly78, Asp80, and Ser82. Pro165 serves as a coordination point for substrate. A heme b-binding site is contributed by His195. Thr196 provides a ligand contact to Ca(2+). N-linked (GlcNAc...) asparagine glycans are attached at residues Asn211 and Asn221. The Ca(2+) site is built by Asp241, Thr244, and Asp249.

Belongs to the peroxidase family. Classical plant (class III) peroxidase subfamily. The cofactor is heme b. Ca(2+) is required as a cofactor. Post-translationally, N-glycosylated. As to expression, expressed in tracheary elements, roots, young and old hypocotyls, and stems in the partially glycosylated form and in roots and young hypocotyls in the fully glycosylated form. None of the isoforms is significantly expressed in leaves or cotyledons.

It is found in the secreted. The catalysed reaction is 2 a phenolic donor + H2O2 = 2 a phenolic radical donor + 2 H2O. In terms of biological role, removal of H(2)O(2), oxidation of toxic reductants, biosynthesis and degradation of lignin, suberization, auxin catabolism, response to environmental stresses such as wounding, pathogen attack and oxidative stress. These functions might be dependent on each isozyme/isoform in each plant tissue. Involved in the synthesis of highly polymerized lignins. The chain is Basic peroxidase (POD3) from Zinnia elegans (Garden zinnia).